The chain runs to 112 residues: uncharacterized protein (112 aa).

N-linked (GlcNAc...) asparagine; by host glycosylation is found at asparagine 29 and asparagine 60. The helical transmembrane segment at 66-86 threads the bilayer; the sequence is IFNGLGFILIVIFIYLLLITL.

The protein belongs to the asfivirus B117L family.

It localises to the host membrane. It is found in the virion. This is an uncharacterized protein from Ornithodoros (relapsing fever ticks).